The following is a 152-amino-acid chain: tRNA-specific adenosine deaminase (152 aa).

Positions 2-111 (AERTHFMELA…AQDPKGGAVE (110 aa)) constitute a CMP/dCMP-type deaminase domain. His-53 contributes to the Zn(2+) binding site. Catalysis depends on Glu-55, which acts as the Proton donor. Cys-83 and Cys-86 together coordinate Zn(2+).

This sequence belongs to the cytidine and deoxycytidylate deaminase family. In terms of assembly, homodimer. Zn(2+) serves as cofactor.

It catalyses the reaction adenosine(34) in tRNA + H2O + H(+) = inosine(34) in tRNA + NH4(+). Functionally, catalyzes the deamination of adenosine to inosine at the wobble position 34 of tRNA(Arg2). The sequence is that of tRNA-specific adenosine deaminase from Agrobacterium fabrum (strain C58 / ATCC 33970) (Agrobacterium tumefaciens (strain C58)).